A 270-amino-acid chain; its full sequence is MDCCKKKRVKKVAKRKSEKVIHLDPDALRYLRFRIGGKYMAERHMFLKKDPSKENSIIVSNIPAFVGEGVVLAIIDQFASFEVEESFVQRSNTADNSLSQGQLTMSITFDKPEAVIQTLALCQDVGPFTITDFLEDPEFPSVLKDSTTLYRKLFPSEEQIQEMADTYVERYDTEQTEARKEAKRKYSEPDEDGWITVTKAKKAAKSVKLKKEDVPLIGGLNNKKKKVDLAYYTFQIKKNRQEKAQELLKKFEEDRKRITQLKQARNFKPI.

Residues 233-268 adopt a coiled-coil conformation; it reads TFQIKKNRQEKAQELLKKFEEDRKRITQLKQARNFK.

The protein belongs to the RRP7 family.

This Caenorhabditis elegans protein is Ribosomal RNA-processing protein 7 homolog.